The primary structure comprises 2065 residues: Cytoskeleton-associated protein 5-A (2065 aa).

2 TOG regions span residues 1–240 (MGDD…DLKA) and 264–515 (VDAY…KETK). HEAT repeat units follow at residues 120 to 157 (EKAE…EFGS), 160 to 197 (MTLK…WIRD), 270 to 311 (LEAV…NPKI), 314 to 352 (GDFA…GLRK), 356 to 393 (SYAG…TTTL), 395 to 432 (NISE…STLP), and 436 to 477 (LKPF…VNPF). Residues 500 to 574 (NGKKGGAAAG…GATAKGKKAV (75 aa)) are disordered. Low complexity predominate over residues 538 to 568 (KAAAAPKKAPAAKPGGPVKKAKAPASSGATA). The segment at 644–808 (KPGFKETNFQ…LSQIDAEFEK (165 aa)) is TOG 3. 2 HEAT repeats span residues 652–689 (FQVM…KVGD) and 748–785 (INVK…YMGA). A disordered region spans residues 809 to 849 (MKGQTPPVSIRGSKHGSGRDEGEEGEEQDEDAPADVTDLLP). Residues 829-841 (EGEEGEEQDEDAP) show a composition bias toward acidic residues. Residues 846–1090 (DLLPRTDISD…AGPPGKASSK (245 aa)) are TOG 4. 4 HEAT repeats span residues 852–889 (DISD…EAKF), 892–929 (PSIG…AMGH), 933–970 (QHVK…QTGM), and 1015–1052 (CVPY…KMSK). Over residues 1074 to 1115 (ASMPAKPAGPPGKASSKQPPAVAQASASPPPAASSDSGSSTS) the composition is skewed to low complexity. The interval 1074 to 1192 (ASMPAKPAGP…AKDEEDKSGP (119 aa)) is disordered. Over residues 1126–1163 (PGTQASKAKTQSVSSEGNTSLNPSNTSLTPSKANTSLS) the composition is skewed to polar residues. Residues 1150–1235 (NTSLTPSKAN…IEQLKTQMSP (86 aa)) are interaction with microtubule lattice. The tract at residues 1191–1460 (GPIYIIVPNG…ERIKRAGKKQ (270 aa)) is TOG 5. HEAT repeat units follow at residues 1251-1288 (QRQI…RFFD), 1295-1318 (MKCL…LTEM), 1319-1355 (EGTS…VYPA), 1357-1390 (KMFN…SYGM), and 1395-1432 (PTPA…VHGE). Disordered regions lie at residues 1982-2001 (DNAK…KSSA) and 2028-2065 (VELD…SSRK). Positions 2002–2065 (PAVVSSTDML…RLERIKSSRK (64 aa)) are interaction with tacc3. Over residues 2038–2048 (STTTSSSASST) the composition is skewed to low complexity. Residues 2051 to 2065 (DDLKKRLERIKSSRK) are compositionally biased toward basic and acidic residues.

The protein belongs to the TOG/XMAP215 family. Interacts with tacc3; two molecules of ckap5 interact with 1 molecule of tacc3 probably mediated by coiled coil domains forming a four-helix bundle. Interacts with tacc3 and clathrin forming the TACC3/ch-TOG/clathrin complex located at spindle inter-microtubules bridges. Interacts with ndc80; indicative for an association with the NDC80 comnplex.

The protein resides in the cytoplasm. The protein localises to the cytoskeleton. It is found in the spindle pole. It localises to the spindle. Its subcellular location is the microtubule organizing center. The protein resides in the centrosome. The protein localises to the chromosome. It is found in the centromere. It localises to the kinetochore. Its function is as follows. Binds to the plus end of microtubules and regulates microtubule dynamics and microtubule organization. Acts as a processive microtubule polymerase. Promotes cytoplasmic microtubule nucleation and elongation. Plays a major role in organizing spindle poles. In spindle formation protects kinetochore microtubules from depolymerization by kif2c and has an essential role in centrosomal microtubule assembly independently of kif2c activity. Contributes to centrosome integrity. Acts as a component of the TACC3/ch-TOG/clathrin complex proposed to contribute to stabilization of kinetochore fibers of the mitotic spindle by acting as inter-microtubule bridge. Enhances the strength of NDC80 complex-mediated kinetochore-tip microtubule attachments. The chain is Cytoskeleton-associated protein 5-A (ckap5-a) from Xenopus laevis (African clawed frog).